We begin with the raw amino-acid sequence, 219 residues long: MNKFSSDSSRTTAQSTINKLLVNLIPGSQLNDAKVAKKAKKSSSAKIISDQIGSRMEFKRNEEKRRKFLKQNNLKKRKMKRKSKDLEAQLERIARLSNIKELQQMSEDSNDPLLDQVIDKKITALLSWTTDNSELGTEIEKLKKDILNTDNEEVRRRKSYRDEEREEAEFRSEVEKGSIAYPGLTPGLAPVGLSDDEDDEEEDESDGFDKEEEEDQFSE.

A compositionally biased stretch (basic and acidic residues) spans 153–176 (EVRRRKSYRDEEREEAEFRSEVEK). The interval 153 to 219 (EVRRRKSYRD…KEEEEDQFSE (67 aa)) is disordered. The segment covering 194–219 (SDDEDDEEEDESDGFDKEEEEDQFSE) has biased composition (acidic residues).

The protein belongs to the RRT14 family.

The protein resides in the nucleus. It localises to the nucleolus. Involved in ribosome biogenesis, probably through modulation of rDNA transcription. The chain is Regulator of rDNA transcription 14 (RRT14) from Komagataella phaffii (strain GS115 / ATCC 20864) (Yeast).